Reading from the N-terminus, the 322-residue chain is Replication factor C small subunit (322 aa).

Position 45–52 (45–52 (GPPGVGKT)) interacts with ATP.

Belongs to the activator 1 small subunits family. RfcS subfamily. In terms of assembly, heteromultimer composed of small subunits (RfcS) and large subunits (RfcL).

Part of the RFC clamp loader complex which loads the PCNA sliding clamp onto DNA. The chain is Replication factor C small subunit from Methanocella arvoryzae (strain DSM 22066 / NBRC 105507 / MRE50).